The sequence spans 148 residues: uncharacterized protein (148 aa).

This is an uncharacterized protein from Bacillus subtilis (strain 168).